The chain runs to 446 residues: Tubulin beta chain (446 aa).

Gln11, Glu69, Ser138, Gly142, Thr143, Gly144, Asn204, and Asn226 together coordinate GTP. Glu69 is a binding site for Mg(2+). Positions 421–446 (EYQQYQDAGIDEEEEEYEEELPEGEE) are disordered. The segment covering 429-446 (GIDEEEEEYEEELPEGEE) has biased composition (acidic residues).

It belongs to the tubulin family. Dimer of alpha and beta chains. A typical microtubule is a hollow water-filled tube with an outer diameter of 25 nm and an inner diameter of 15 nM. Alpha-beta heterodimers associate head-to-tail to form protofilaments running lengthwise along the microtubule wall with the beta-tubulin subunit facing the microtubule plus end conferring a structural polarity. Microtubules usually have 13 protofilaments but different protofilament numbers can be found in some organisms and specialized cells. The cofactor is Mg(2+).

The protein localises to the cytoplasm. It localises to the cytoskeleton. Tubulin is the major constituent of microtubules, a cylinder consisting of laterally associated linear protofilaments composed of alpha- and beta-tubulin heterodimers. Microtubules grow by the addition of GTP-tubulin dimers to the microtubule end, where a stabilizing cap forms. Below the cap, tubulin dimers are in GDP-bound state, owing to GTPase activity of alpha-tubulin. The sequence is that of Tubulin beta chain (TUB2) from Fusarium fujikuroi (Bakanae and foot rot disease fungus).